We begin with the raw amino-acid sequence, 311 residues long: ATP synthase subunit a (311 aa).

6 helical membrane passes run 62–82 (AVHVDTLGWGIFLALVVGFFM), 123–143 (VAPMAITVFSWVFMMNLMDLI), 179–199 (VTVFILMLFFSVQQKGLWGFI), 213–233 (FWYFNLILIPFNFILETVALI), 253–273 (IFILIATLFSVGLLFGFLGGI), and 276–296 (FGWAVLHILVILIQAFVFMVL).

The protein belongs to the ATPase A chain family. As to quaternary structure, F-type ATPases have 2 components, CF(1) - the catalytic core - and CF(0) - the membrane proton channel. CF(1) has five subunits: alpha(3), beta(3), gamma(1), delta(1), epsilon(1). CF(0) has three main subunits: a(1), b(2) and c(9-12). The alpha and beta chains form an alternating ring which encloses part of the gamma chain. CF(1) is attached to CF(0) by a central stalk formed by the gamma and epsilon chains, while a peripheral stalk is formed by the delta and b chains.

Its subcellular location is the cell inner membrane. Key component of the proton channel; it plays a direct role in the translocation of protons across the membrane. The sequence is that of ATP synthase subunit a from Teredinibacter turnerae (strain ATCC 39867 / T7901).